Reading from the N-terminus, the 23-residue chain is Phallacidin proprotein 1 (23 aa).

A propeptide is located at residue Pro-1. The segment at residues 2–8 (AWLVDCP) is a cross-link (cyclopeptide (Ala-Pro)). A cross-link (2'-cysteinyl-6'-hydroxytryptophan sulfoxide (Trp-Cys)) is located at residues 3–7 (WLVDC). Residues 9–23 (CVGDDINRLLTRGEK) constitute a propeptide that is removed on maturation.

It belongs to the MSDIN fungal toxin family. In terms of processing, processed by the macrocyclase-peptidase enzyme POPB to yield a toxic cyclic heptapeptide. POPB first removes 10 residues from the N-terminus. Conformational trapping of the remaining peptide forces the enzyme to release this intermediate rather than proceed to macrocyclization. The enzyme rebinds the remaining peptide in a different conformation and catalyzes macrocyclization of the N-terminal 7 residues.

In terms of biological role, major toxin that belongs to the bicyclic heptapeptides called phallotoxins. Although structurally related to amatoxins, phallotoxins have a different mode of action, which is the stabilization of F-actin. Phallotoxins are poisonous when administered parenterally, but not orally because of poor absorption. In Amanita phalloides (Death cap), this protein is Phallacidin proprotein 1.